A 287-amino-acid polypeptide reads, in one-letter code: MAGAKEIRSKIASIKSTQKITSAMEKVAVSKMRKAQLRMAASRPYAERIRQVIGHLAKANPEYKHPFMVERPVKRVGYILVSTDRGLCGGLNINLFKALIKSMKEWHDKGVEADFCVIGNKGASFFRSYGGNVVAAIGNLGEEPSINSLIGSIKVMLDAFHEGRVDRLYLASNKFINTMTQKPVVEQLLPLAASDDEGVQKGTWDYLYEPNAQQLLDALLVRYMESQVYQAVVENGAAEQAARMIAMKNATDNAGELISDLQLVYNKARQAAITQEISEIVGGAAAV.

The protein belongs to the ATPase gamma chain family. In terms of assembly, F-type ATPases have 2 components, CF(1) - the catalytic core - and CF(0) - the membrane proton channel. CF(1) has five subunits: alpha(3), beta(3), gamma(1), delta(1), epsilon(1). CF(0) has three main subunits: a, b and c.

The protein resides in the cell inner membrane. Produces ATP from ADP in the presence of a proton gradient across the membrane. The gamma chain is believed to be important in regulating ATPase activity and the flow of protons through the CF(0) complex. The polypeptide is ATP synthase gamma chain (Azotobacter vinelandii (strain DJ / ATCC BAA-1303)).